A 328-amino-acid polypeptide reads, in one-letter code: GMP reductase (328 aa).

Catalysis depends on Cys-176, which acts as the Thioimidate intermediate. 205–228 (IIADGGIRTHGDIAKSIRFGASMI) is a binding site for NADP(+).

It belongs to the IMPDH/GMPR family. GuaC type 2 subfamily.

The enzyme catalyses IMP + NH4(+) + NADP(+) = GMP + NADPH + 2 H(+). Functionally, catalyzes the irreversible NADPH-dependent deamination of GMP to IMP. It functions in the conversion of nucleobase, nucleoside and nucleotide derivatives of G to A nucleotides, and in maintaining the intracellular balance of A and G nucleotides. This chain is GMP reductase, found in Streptococcus pneumoniae (strain ATCC 700669 / Spain 23F-1).